Reading from the N-terminus, the 432-residue chain is Glutamate-1-semialdehyde 2,1-aminomutase 1 (432 aa).

The residue at position 272 (K272) is an N6-(pyridoxal phosphate)lysine.

The protein belongs to the class-III pyridoxal-phosphate-dependent aminotransferase family. HemL subfamily. In terms of assembly, homodimer. Requires pyridoxal 5'-phosphate as cofactor.

It localises to the cytoplasm. It carries out the reaction (S)-4-amino-5-oxopentanoate = 5-aminolevulinate. Its pathway is porphyrin-containing compound metabolism; protoporphyrin-IX biosynthesis; 5-aminolevulinate from L-glutamyl-tRNA(Glu): step 2/2. The polypeptide is Glutamate-1-semialdehyde 2,1-aminomutase 1 (Exiguobacterium sibiricum (strain DSM 17290 / CCUG 55495 / CIP 109462 / JCM 13490 / 255-15)).